Here is a 213-residue protein sequence, read N- to C-terminus: Glycerol-3-phosphate acyltransferase (213 aa).

A run of 5 helical transmembrane segments spans residues 3–23, 68–88, 112–132, 134–154, and 163–183; these read LLLF…LWIG, ILLP…GFFA, VLLG…VLVL, LFSM…LSVL, and LPNY…IIII.

Belongs to the PlsY family. As to quaternary structure, probably interacts with PlsX.

It localises to the cell membrane. It catalyses the reaction an acyl phosphate + sn-glycerol 3-phosphate = a 1-acyl-sn-glycero-3-phosphate + phosphate. It functions in the pathway lipid metabolism; phospholipid metabolism. In terms of biological role, catalyzes the transfer of an acyl group from acyl-phosphate (acyl-PO(4)) to glycerol-3-phosphate (G3P) to form lysophosphatidic acid (LPA). This enzyme utilizes acyl-phosphate as fatty acyl donor, but not acyl-CoA or acyl-ACP. The protein is Glycerol-3-phosphate acyltransferase of Streptococcus pyogenes serotype M28 (strain MGAS6180).